The following is a 561-amino-acid chain: Potassium-transporting ATPase potassium-binding subunit (561 aa).

Transmembrane regions (helical) follow at residues 2–22 (GLGLLQIGLTLCIVIAITPVL), 65–85 (YIRAILYTNLFMGILVYSLIH), 135–155 (ALGFLMFTSAATGLAVGIAFI), 177–197 (ILLPISVIGAIALVLLGVPQT), 253–273 (FIETIAMIAIPAAMIYTYGVF), 280–300 (AWLLFWMVFIVFVILVWVAAT), 327–347 (FGWAETALWAVMTTATMCGAV), 353–373 (ALMPQGLFATLFNLFLQIIWG), 378–398 (GTAYLFIYLILTVFLTGLMVG), 413–433 (IVLASLILLVHPIVVLIPSAI), 482–502 (LSTSLSILVGRYVPIIAMLLL), and 531–551 (AGIVLILGVLTFFPVLALGPI).

It belongs to the KdpA family. As to quaternary structure, the system is composed of three essential subunits: KdpA, KdpB and KdpC.

Its subcellular location is the cell membrane. Part of the high-affinity ATP-driven potassium transport (or Kdp) system, which catalyzes the hydrolysis of ATP coupled with the electrogenic transport of potassium into the cytoplasm. This subunit binds the extracellular potassium ions and delivers the ions to the membrane domain of KdpB through an intramembrane tunnel. In Anabaena sp. (strain L31), this protein is Potassium-transporting ATPase potassium-binding subunit.